The primary structure comprises 61 residues: MDLQQSETDDKQPEQLVIYVCGDCGQENILKRGDVFQCRDCGFRILYKKRILDKKETRIGV.

Positions 21, 24, 38, and 41 each coordinate Zn(2+).

This sequence belongs to the archaeal Rpo12/eukaryotic RPC10 RNA polymerase subunit family.

The protein resides in the nucleus. This is DNA-directed RNA polymerase subunit 12-like protein (NRPB12L) from Arabidopsis thaliana (Mouse-ear cress).